A 552-amino-acid polypeptide reads, in one-letter code: Steroid transmembrane transporter SLC22A24 (552 aa).

12 helical membrane-spanning segments follow: residues 16–36, 146–166, 178–200, 204–226, 234–254, 260–280, 350–370, 380–400, 407–427, 435–455, 474–492, and 496–516; these read FQIC…PNIV, SMVQ…YGHL, LCFL…LVYC, FLAG…EWTL, IMVL…LAFA, ILQL…WKMV, VFGL…LILN, LFQI…LLTL, ISQI…TFLP, VVLA…ASVH, VSGR…LMAY, and LPWI…LLLP.

This sequence belongs to the major facilitator (TC 2.A.1) superfamily. Organic cation transporter (TC 2.A.1.19) family. As to expression, localized to the kidney. Highly specific expression pattern in the nephron, localized to segment 3 of the proximal tubule.

It is found in the cell membrane. It carries out the reaction estrone 3-sulfate(out) + glutarate(in) = estrone 3-sulfate(in) + glutarate(out). The enzyme catalyses 17beta-estradiol 17-O-(beta-D-glucuronate)(out) + glutarate(in) = 17beta-estradiol 17-O-(beta-D-glucuronate)(in) + glutarate(out). The catalysed reaction is taurocholate(out) + glutarate(in) = taurocholate(in) + glutarate(out). It catalyses the reaction 5alpha-androstane-3alpha,17beta-diol 3-O-(beta-D-glucuronate)(out) + glutarate(in) = 5alpha-androstane-3alpha,17beta-diol 3-O-(beta-D-glucuronate)(in) + glutarate(out). It carries out the reaction glycocholate(out) + glutarate(in) = glycocholate(in) + glutarate(out). The enzyme catalyses dehydroepiandrosterone 3-sulfate(out) + glutarate(in) = dehydroepiandrosterone 3-sulfate(in) + glutarate(out). The catalysed reaction is glutarate(in) + succinate(out) = glutarate(out) + succinate(in). Its activity is regulated as follows. Transport is chloride sensitive and transtimulated by glutaric acid. Transport is inhibited by anionic compounds from different chemical classes. In terms of biological role, renal transmembrane organic anion/dicarboxylate exchanger that participates in the reabsorption of conjugated steroids including estradiol-17beta-D-glucuronide (or 17beta-estradiol 17-O-(beta-D-glucuronate)), androstanediol glucuronide (or 5alpha-androstane-3alpha,17beta-diol 3-O-(beta-D-glucuronate)), and estrone 3-sulfate, as well as bile acids taurocholate and glycocholate, driven by an outward gradient of dicarboxylates such as glutarate or succinate. Its function is as follows. Similar uptake function as Isoform 1. Functionally, lack of transporter activity. The chain is Steroid transmembrane transporter SLC22A24 from Homo sapiens (Human).